Consider the following 504-residue polypeptide: Glucose-6-phosphate isomerase (504 aa).

Glutamate 333 acts as the Proton donor in catalysis. Active-site residues include histidine 364 and lysine 473.

Belongs to the GPI family.

The protein resides in the cytoplasm. It catalyses the reaction alpha-D-glucose 6-phosphate = beta-D-fructose 6-phosphate. The protein operates within carbohydrate biosynthesis; gluconeogenesis. Its pathway is carbohydrate degradation; glycolysis; D-glyceraldehyde 3-phosphate and glycerone phosphate from D-glucose: step 2/4. Catalyzes the reversible isomerization of glucose-6-phosphate to fructose-6-phosphate. The protein is Glucose-6-phosphate isomerase of Stenotrophomonas maltophilia (strain K279a).